A 473-amino-acid polypeptide reads, in one-letter code: Azaphilone pigments biosynthesis cluster protein L (473 aa).

A signal peptide spans 1 to 23 (MAELSIASGIVGLLSLGIQVTQS). ANK repeat units follow at residues 403-432 (EYGNALQAASSGGHWKVVQMLLDQGADVNA) and 436-465 (RYGNALHAASSRGHKKVVQMLLDHGANVST). An N-linked (GlcNAc...) asparagine glycan is attached at Asn462.

In terms of biological role, part of the gene cluster that mediates the biosynthesis of azaphilone pigments (MonAzPs), a complex mixture of compounds with a common azaphilone skeleton very widely used as food colorants. Seems not to play a direct role in the biosynthesis but might have a regulatorx function. The polypeptide is Azaphilone pigments biosynthesis cluster protein L (Monascus ruber (Mold)).